We begin with the raw amino-acid sequence, 206 residues long: RNA-binding protein with multiple splicing 2 (206 aa).

At Ser-2 the chain carries N-acetylserine. The 78-residue stretch at 25 to 102 (RTLFVSGLPV…QTLRLEFAKA (78 aa)) folds into the RRM domain. An important for homodimerization region spans residues 35 to 45 (DIKPRELYLLF).

Homodimer. Interacts with EEF2.

The protein localises to the cytoplasm. Its subcellular location is the nucleus. It localises to the stress granule. RNA-binding protein involved in the regulation of smooth muscle cell differentiation and proliferation in the gastrointestinal system. Binds NOG mRNA, the major inhibitor of the bone morphogenetic protein (BMP) pathway. Mediates an increase of NOG mRNA levels, thereby contributing to the negative regulation of BMP signaling pathway and promoting reversible dedifferentiation and proliferation of smooth muscle cells. Acts as a pre-mRNA alternative splicing regulator. Mediates ACTN1 and FLNB alternative splicing. Likely binds to mRNA tandem CAC trinucleotide or CA dinucleotide motifs. The chain is RNA-binding protein with multiple splicing 2 (Rbpms2) from Mus musculus (Mouse).